A 279-amino-acid chain; its full sequence is Protoheme IX farnesyltransferase (279 aa).

Helical transmembrane passes span Met-1–Ala-21, Ile-29–Asn-49, Ile-79–Ile-99, Phe-101–Leu-121, Phe-128–Val-148, Cys-156–Ile-176, Ile-200–Phe-220, Phe-225–Ser-245, and Ile-254–Met-274.

It belongs to the UbiA prenyltransferase family. Protoheme IX farnesyltransferase subfamily.

It is found in the cell membrane. The enzyme catalyses heme b + (2E,6E)-farnesyl diphosphate + H2O = Fe(II)-heme o + diphosphate. It functions in the pathway porphyrin-containing compound metabolism; heme O biosynthesis; heme O from protoheme: step 1/1. In terms of biological role, converts heme B (protoheme IX) to heme O by substitution of the vinyl group on carbon 2 of heme B porphyrin ring with a hydroxyethyl farnesyl side group. The polypeptide is Protoheme IX farnesyltransferase (Buchnera aphidicola subsp. Cinara cedri (strain Cc)).